The primary structure comprises 119 residues: Large ribosomal subunit protein bL20 (119 aa).

It belongs to the bacterial ribosomal protein bL20 family.

Functionally, binds directly to 23S ribosomal RNA and is necessary for the in vitro assembly process of the 50S ribosomal subunit. It is not involved in the protein synthesizing functions of that subunit. The polypeptide is Large ribosomal subunit protein bL20 (Xanthomonas oryzae pv. oryzae (strain PXO99A)).